The following is a 166-amino-acid chain: Cyclin-dependent kinase 4 inhibitor D (166 aa).

Met-1 carries the post-translational modification N-acetylmethionine. ANK repeat units follow at residues 41-69 (FGKT…SPNV), 73-102 (SGTS…DVNV), 106-135 (TGAL…LHRR), and 138-166 (RGLT…VAPL).

This sequence belongs to the CDKN2 cyclin-dependent kinase inhibitor family. Interacts with CDK6.

It localises to the nucleus. It is found in the cytoplasm. Interacts strongly with CDK4 and CDK6 and inhibits them. The sequence is that of Cyclin-dependent kinase 4 inhibitor D (CDKN2D) from Homo sapiens (Human).